Reading from the N-terminus, the 275-residue chain is uncharacterized protein (275 aa).

The [4Fe-4S] cluster site is built by Cys97, Cys102, Cys136, and Cys140. Cys140 is a siroheme binding site.

Belongs to the nitrite and sulfite reductase 4Fe-4S domain family.

This is an uncharacterized protein from Methanocaldococcus jannaschii (strain ATCC 43067 / DSM 2661 / JAL-1 / JCM 10045 / NBRC 100440) (Methanococcus jannaschii).